Here is a 338-residue protein sequence, read N- to C-terminus: tRNA pseudouridine synthase D (338 aa).

The active-site Nucleophile is aspartate 79. Residues 154-303 form the TRUD domain; it reads GVPNYFGEQR…EEAWRANILY (150 aa).

Belongs to the pseudouridine synthase TruD family.

The catalysed reaction is uridine(13) in tRNA = pseudouridine(13) in tRNA. Its function is as follows. Responsible for synthesis of pseudouridine from uracil-13 in transfer RNAs. This chain is tRNA pseudouridine synthase D, found in Legionella pneumophila (strain Corby).